Consider the following 124-residue polypeptide: Small ribosomal subunit protein uS12 (124 aa).

Positions 1-25 (MPTINQLIRKPRKSQKEKTASPALQ) are disordered. Asp89 is modified (3-methylthioaspartic acid).

The protein belongs to the universal ribosomal protein uS12 family. Part of the 30S ribosomal subunit. Contacts proteins S8 and S17. May interact with IF1 in the 30S initiation complex.

Functionally, with S4 and S5 plays an important role in translational accuracy. Its function is as follows. Interacts with and stabilizes bases of the 16S rRNA that are involved in tRNA selection in the A site and with the mRNA backbone. Located at the interface of the 30S and 50S subunits, it traverses the body of the 30S subunit contacting proteins on the other side and probably holding the rRNA structure together. The combined cluster of proteins S8, S12 and S17 appears to hold together the shoulder and platform of the 30S subunit. The sequence is that of Small ribosomal subunit protein uS12 from Borrelia duttonii (strain Ly).